We begin with the raw amino-acid sequence, 264 residues long: Thymidylate synthase (264 aa).

Residue arginine 21 coordinates dUMP. Histidine 51 contacts (6R)-5,10-methylene-5,6,7,8-tetrahydrofolate. Position 126-127 (126-127 (RR)) interacts with dUMP. Catalysis depends on cysteine 146, which acts as the Nucleophile. DUMP-binding positions include 166-169 (RSCD), asparagine 177, and 207-209 (HLY). Aspartate 169 serves as a coordination point for (6R)-5,10-methylene-5,6,7,8-tetrahydrofolate. (6R)-5,10-methylene-5,6,7,8-tetrahydrofolate is bound at residue alanine 263.

The protein belongs to the thymidylate synthase family. Bacterial-type ThyA subfamily. Homodimer.

The protein localises to the cytoplasm. The enzyme catalyses dUMP + (6R)-5,10-methylene-5,6,7,8-tetrahydrofolate = 7,8-dihydrofolate + dTMP. It participates in pyrimidine metabolism; dTTP biosynthesis. In terms of biological role, catalyzes the reductive methylation of 2'-deoxyuridine-5'-monophosphate (dUMP) to 2'-deoxythymidine-5'-monophosphate (dTMP) while utilizing 5,10-methylenetetrahydrofolate (mTHF) as the methyl donor and reductant in the reaction, yielding dihydrofolate (DHF) as a by-product. This enzymatic reaction provides an intracellular de novo source of dTMP, an essential precursor for DNA biosynthesis. The chain is Thymidylate synthase from Pectobacterium carotovorum subsp. carotovorum (strain PC1).